A 246-amino-acid chain; its full sequence is Mast cell protease 1 (246 aa).

An N-terminal signal peptide occupies residues 1 to 18; it reads MQALLFLLALLWPPEAGA. The propeptide at 19–20 is activation peptide; that stretch reads EE. In terms of domain architecture, Peptidase S1 spans 21–244; sequence IIGGVESKPH…YVPWINLVIR (224 aa). A disulfide bridge connects residues C50 and C66. Residues H65 and D109 each act as charge relay system in the active site. 2 disulfide bridges follow: C143-C208 and C174-C187. Catalysis depends on S202, which acts as the Charge relay system.

The protein belongs to the peptidase S1 family. Granzyme subfamily.

The protein is Mast cell protease 1 of Meriones unguiculatus (Mongolian jird).